Here is a 437-residue protein sequence, read N- to C-terminus: Tol-Pal system protein TolB (437 aa).

The N-terminal stretch at 1–23 (MQKRHPIIYLLITLLIFVPVSYG) is a signal peptide.

This sequence belongs to the TolB family. As to quaternary structure, the Tol-Pal system is composed of five core proteins: the inner membrane proteins TolA, TolQ and TolR, the periplasmic protein TolB and the outer membrane protein Pal. They form a network linking the inner and outer membranes and the peptidoglycan layer.

The protein localises to the periplasm. Its function is as follows. Part of the Tol-Pal system, which plays a role in outer membrane invagination during cell division and is important for maintaining outer membrane integrity. This Coxiella burnetii (strain RSA 493 / Nine Mile phase I) protein is Tol-Pal system protein TolB.